The sequence spans 671 residues: DNA ligase (671 aa).

NAD(+) is bound by residues 32 to 36 (DAEYD), 81 to 82 (SL), and Glu113. The N6-AMP-lysine intermediate role is filled by Lys115. Arg136, Glu173, Lys290, and Lys314 together coordinate NAD(+). Zn(2+) is bound by residues Cys408, Cys411, Cys426, and Cys432. The 79-residue stretch at 593–671 (EIDSPFAGKT…EAEMLRLLGV (79 aa)) folds into the BRCT domain.

It belongs to the NAD-dependent DNA ligase family. LigA subfamily. It depends on Mg(2+) as a cofactor. The cofactor is Mn(2+).

The catalysed reaction is NAD(+) + (deoxyribonucleotide)n-3'-hydroxyl + 5'-phospho-(deoxyribonucleotide)m = (deoxyribonucleotide)n+m + AMP + beta-nicotinamide D-nucleotide.. Functionally, DNA ligase that catalyzes the formation of phosphodiester linkages between 5'-phosphoryl and 3'-hydroxyl groups in double-stranded DNA using NAD as a coenzyme and as the energy source for the reaction. It is essential for DNA replication and repair of damaged DNA. This chain is DNA ligase, found in Salmonella arizonae (strain ATCC BAA-731 / CDC346-86 / RSK2980).